The sequence spans 65 residues: uncharacterized protein (65 aa).

Residues 1-20 (MRFSNCFNKFKFCIGTEKKY) are Cytoplasmic-facing. The helical transmembrane segment at 21 to 43 (SFPICTSTYTSFSLFACIWSIFI) threads the bilayer. Residues 44–65 (HISLNKSFIYQKSWYYSFFQNR) are Extracellular-facing.

The protein resides in the host membrane. This is an uncharacterized protein from Acidianus sp. F28 (AFV-2).